The primary structure comprises 163 residues: MNNELLQRIIEEVVSRLKKRAESTLSLSVAQLREIEPRTLCCQYSSLHLLQADLPLLEQIAEGCADNMSVVTIHEALACGVRVKISLQHRLLPAIPVRKLARLPLEFSDELGRIIVLHPDKLLSYADVAQLKGGVLVLRRRCVVTALAQDAVGTRNVQLIKQE.

Belongs to the PduM family. In terms of assembly, interacts with shell protein PduK.

It localises to the bacterial microcompartment. It functions in the pathway polyol metabolism; 1,2-propanediol degradation. Its function is as follows. Plays an essential role in assembly and/or stability of the bacterial microcompartment (BMC) dedicated to 1,2-propanediol (1,2-PD) degradation. Expression of a cosmid containing the full 21-gene pdu operon in E.coli allows E.coli to grow on 1,2-propanediol (1,2-PD) with the appearance of bacterial microcompartments (BMC) in its cytoplasm. In terms of biological role, the 1,2-PD-specific bacterial microcompartment (BMC) concentrates low levels of 1,2-PD catabolic enzymes, concentrates volatile reaction intermediates thus enhancing pathway flux and keeps the level of toxic, mutagenic propionaldehyde low. This Citrobacter freundii protein is Bacterial microcompartment assembly protein PduM.